The primary structure comprises 385 residues: U6 small nuclear RNA (adenine-(43)-N(6))-methyltransferase (385 aa).

4 residues coordinate S-adenosyl-L-methionine: Arg54, Gly83, Glu106, and Asn155.

The protein belongs to the methyltransferase superfamily. METTL16/RlmF family.

Its subcellular location is the cytoplasm. It localises to the nucleus. The catalysed reaction is adenosine in U6 snRNA + S-adenosyl-L-methionine = N(6)-methyladenosine in U6 snRNA + S-adenosyl-L-homocysteine + H(+). Functionally, RNA N6-methyltransferase that mediates N6-methylation of adenine of U6 small nuclear RNA (U6 snRNA). The polypeptide is U6 small nuclear RNA (adenine-(43)-N(6))-methyltransferase (Schizosaccharomyces pombe (strain 972 / ATCC 24843) (Fission yeast)).